A 118-amino-acid chain; its full sequence is uncharacterized protein (118 aa).

This sequence to S.pombe tam6.

It localises to the mitochondrion. This is an uncharacterized protein from Saccharomyces cerevisiae (strain ATCC 204508 / S288c) (Baker's yeast).